The chain runs to 250 residues: Acidic endochitinase (250 aa).

The residue at position 1 (glutamine 1) is a Pyrrolidone carboxylic acid. The 36-residue stretch at 1–36 (QNCQCDTTIYCCSQHGYCGNSYDYCGPGCQAGPCWD) folds into the Chitin-binding type-1 domain. Cystine bridges form between cysteine 3/cysteine 12, cysteine 5/cysteine 18, cysteine 11/cysteine 25, cysteine 29/cysteine 34, cysteine 66/cysteine 115, cysteine 128/cysteine 136, and cysteine 218/cysteine 250. Glutamate 110 (proton donor) is an active-site residue.

Belongs to the glycosyl hydrolase 19 family. Chitinase class I subfamily.

It carries out the reaction Random endo-hydrolysis of N-acetyl-beta-D-glucosaminide (1-&gt;4)-beta-linkages in chitin and chitodextrins.. In terms of biological role, defense against chitin-containing fungal pathogens. The chain is Acidic endochitinase from Dioscorea japonica (Japanese yam).